Here is a 286-residue protein sequence, read N- to C-terminus: Peroxisomal membrane protein pex14 (286 aa).

The SH3-binding signature appears at 61–69; the sequence is TSNFVSRDW. Positions 122 to 214 form a coiled coil; it reads KILENLDEQT…REISSLRCLQ (93 aa). The tract at residues 218-239 is disordered; it reads KKDDTFATTSNSSIPVLENPLD.

It belongs to the peroxin-14 family. Interacts with PEX13 (via SH3 domain); forming the PEX13-PEX14 docking complex. Interacts with PEX5 (via WxxxF/Y motifs).

Its subcellular location is the peroxisome membrane. Component of the PEX13-PEX14 docking complex, a translocon channel that specifically mediates the import of peroxisomal cargo proteins bound to PEX5 receptor. The PEX13-PEX14 docking complex forms a large import pore which can be opened to a diameter of about 9 nm. Mechanistically, PEX5 receptor along with cargo proteins associates with the PEX14 subunit of the PEX13-PEX14 docking complex in the cytosol, leading to the insertion of the receptor into the organelle membrane with the concomitant translocation of the cargo into the peroxisome matrix. The protein is Peroxisomal membrane protein pex14 (pex14) of Schizosaccharomyces pombe (strain 972 / ATCC 24843) (Fission yeast).